A 257-amino-acid chain; its full sequence is Hydroxyacylglutathione hydrolase (257 aa).

The Zn(2+) site is built by His-54, His-56, Asp-58, His-59, His-113, Asp-137, and His-175.

This sequence belongs to the metallo-beta-lactamase superfamily. Glyoxalase II family. As to quaternary structure, monomer. Requires Zn(2+) as cofactor.

The enzyme catalyses an S-(2-hydroxyacyl)glutathione + H2O = a 2-hydroxy carboxylate + glutathione + H(+). The protein operates within secondary metabolite metabolism; methylglyoxal degradation; (R)-lactate from methylglyoxal: step 2/2. In terms of biological role, thiolesterase that catalyzes the hydrolysis of S-D-lactoyl-glutathione to form glutathione and D-lactic acid. In Synechocystis sp. (strain ATCC 27184 / PCC 6803 / Kazusa), this protein is Hydroxyacylglutathione hydrolase.